We begin with the raw amino-acid sequence, 258 residues long: MGLSGKNVIFVGGLGFIGYEACKQLMAKNMASFFVFDVLDKPENIKALQALNPKTKVYYTKFDITSKQSIKSALADVVAKVKYIDALINGAGILTDPNVELTMNINLIGLINTTLEGLPLMDKNKQGRGGVIVNIASVLGLEPCPPAAVYCASKFGVMGFSRSIGDPYYYNITGVAVVTFCPGLTETPLKNNIGSKYTFEYSKKISEELNSTKTQKPEVCGAHLAQVVESHENGGIYISNQGTLAKVTPTVYWQPTYH.

An NAD(+)-binding site is contributed by 9-33 (IFVGGLGFIGYEACKQLMAKNMASF). Serine 137 lines the substrate pocket. Catalysis depends on tyrosine 150, which acts as the Proton acceptor.

This sequence belongs to the short-chain dehydrogenases/reductases (SDR) family. As to quaternary structure, homodimer.

The catalysed reaction is a primary alcohol + NAD(+) = an aldehyde + NADH + H(+). It catalyses the reaction a secondary alcohol + NAD(+) = a ketone + NADH + H(+). This is Alcohol dehydrogenase 2 (ADH2) from Ceratitis capitata (Mediterranean fruit fly).